The primary structure comprises 316 residues: Pantothenate kinase (316 aa).

ATP is bound at residue 95-102 (GSVAVGKS).

Belongs to the prokaryotic pantothenate kinase family.

It is found in the cytoplasm. The catalysed reaction is (R)-pantothenate + ATP = (R)-4'-phosphopantothenate + ADP + H(+). The protein operates within cofactor biosynthesis; coenzyme A biosynthesis; CoA from (R)-pantothenate: step 1/5. This is Pantothenate kinase from Cronobacter sakazakii (strain ATCC BAA-894) (Enterobacter sakazakii).